Here is a 436-residue protein sequence, read N- to C-terminus: Enolase (436 aa).

Gln167 contributes to the (2R)-2-phosphoglycerate binding site. The Proton donor role is filled by Glu209. Positions 246, 291, and 318 each coordinate Mg(2+). The (2R)-2-phosphoglycerate site is built by Lys343, Arg372, Ser373, and Lys394. Lys343 serves as the catalytic Proton acceptor.

This sequence belongs to the enolase family. As to quaternary structure, component of the RNA degradosome, a multiprotein complex involved in RNA processing and mRNA degradation. Mg(2+) is required as a cofactor.

The protein localises to the cytoplasm. The protein resides in the secreted. It localises to the cell surface. The enzyme catalyses (2R)-2-phosphoglycerate = phosphoenolpyruvate + H2O. The protein operates within carbohydrate degradation; glycolysis; pyruvate from D-glyceraldehyde 3-phosphate: step 4/5. Catalyzes the reversible conversion of 2-phosphoglycerate (2-PG) into phosphoenolpyruvate (PEP). It is essential for the degradation of carbohydrates via glycolysis. This is Enolase from Actinobacillus pleuropneumoniae serotype 3 (strain JL03).